The primary structure comprises 81 residues: Short neurotoxin 2 (81 aa).

An N-terminal signal peptide occupies residues 1 to 21; that stretch reads MKTLLLTLVVVTIVCLDLGYT. 4 cysteine pairs are disulfide-bonded: cysteine 24/cysteine 43, cysteine 38/cysteine 60, cysteine 62/cysteine 73, and cysteine 74/cysteine 79.

Belongs to the three-finger toxin family. Short-chain subfamily. Type I alpha-neurotoxin sub-subfamily. Expressed by the venom gland.

The protein resides in the secreted. In terms of biological role, binds to muscle nicotinic acetylcholine receptor (nAChR) and inhibit acetylcholine from binding to the receptor, thereby impairing neuromuscular transmission. This chain is Short neurotoxin 2, found in Hydrophis peronii (Spiny-headed seasnake).